A 605-amino-acid polypeptide reads, in one-letter code: Indole-3-acetic acid-amido synthetase GH3.8 (605 aa).

Residues S115, 342 to 346 (MYASS), Y365, D421, and R440 contribute to the AMP site.

This sequence belongs to the IAA-amido conjugating enzyme family. In terms of tissue distribution, expressed in the inner floral organs (lodicules, stamens and carpels) and at lower levels in lemmas and paleas.

Catalyzes the synthesis of indole-3-acetic acid (IAA)-amino acid conjugates, providing a mechanism for the plant to cope with the presence of excessive free auxin. Produces more IAA-Asp levels than IAA-Ala levels in vitro. May participate in the activation of disease resistance by preventing the accumulation of free IAA, which reduces the expression of a group of auxin-responsive genes encoding expansins that control cell wall loosening and expansion. Contributes to late events in stamen and carpel differentiation, and influences floret fertility. The polypeptide is Indole-3-acetic acid-amido synthetase GH3.8 (GH3.8) (Oryza sativa subsp. indica (Rice)).